Here is a 270-residue protein sequence, read N- to C-terminus: uncharacterized protein (270 aa).

The 233-residue stretch at 34 to 266 (LIARGLTKSY…PDVRRLYLGD (233 aa)) folds into the ABC transporter domain. 66–73 (GPNGAGKT) is a binding site for ATP.

It belongs to the ABC transporter superfamily.

This is an uncharacterized protein from Rhizobium meliloti (strain 1021) (Ensifer meliloti).